The following is a 606-amino-acid chain: Aspartate--tRNA(Asp/Asn) ligase (606 aa).

L-aspartate is bound at residue Glu175. An aspartate region spans residues 199-202 (QLFK). Arg221 is an L-aspartate binding site. ATP contacts are provided by residues 221-223 (RDE) and Gln230. His453 is a binding site for L-aspartate. Glu487 serves as a coordination point for ATP. L-aspartate is bound at residue Arg494. 539–542 (GWDR) is a binding site for ATP. The disordered stretch occupies residues 564–606 (GGVDPLTDAPGTIPAEQRKETGVDFKPEKAAKAAQGEKAGKES). Basic and acidic residues predominate over residues 579-594 (EQRKETGVDFKPEKAA).

It belongs to the class-II aminoacyl-tRNA synthetase family. Type 1 subfamily. As to quaternary structure, homodimer.

The protein resides in the cytoplasm. It catalyses the reaction tRNA(Asx) + L-aspartate + ATP = L-aspartyl-tRNA(Asx) + AMP + diphosphate. Functionally, aspartyl-tRNA synthetase with relaxed tRNA specificity since it is able to aspartylate not only its cognate tRNA(Asp) but also tRNA(Asn). Reaction proceeds in two steps: L-aspartate is first activated by ATP to form Asp-AMP and then transferred to the acceptor end of tRNA(Asp/Asn). The chain is Aspartate--tRNA(Asp/Asn) ligase from Corynebacterium aurimucosum (strain ATCC 700975 / DSM 44827 / CIP 107346 / CN-1) (Corynebacterium nigricans).